We begin with the raw amino-acid sequence, 206 residues long: Tumor protein D54 (206 aa).

At Met-1 the chain carries N-acetylmethionine. A compositionally biased stretch (polar residues) spans 1–14 (MDSAGQDINLNSPN). A disordered region spans residues 1-24 (MDSAGQDINLNSPNKGLLSDSMTD). 4 positions are modified to phosphoserine: Ser-3, Ser-12, Ser-19, and Ser-21. A coiled-coil region spans residues 38 to 82 (VEGLTEAEEEELRAELTKVEEEIVTLRQVLAAKERHCGELKRRLG). Residues Ser-96, Ser-149, and Ser-161 each carry the phosphoserine modification. Thr-163 is subject to Phosphothreonine. At Ser-166 the chain carries Phosphoserine. At Thr-173 the chain carries Phosphothreonine. Over residues 175–185 (KSKVVGDRENG) the composition is skewed to basic and acidic residues. Residues 175–206 (KSKVVGDRENGSDNLPSSAGSGDKPLSDPAPF) form a disordered region. A phosphoserine mark is found at Ser-192 and Ser-195.

It belongs to the TPD52 family. Forms a homodimer or heterodimer with other members of the family. Interacts with MAL2.

The chain is Tumor protein D54 (TPD52L2) from Homo sapiens (Human).